Consider the following 198-residue polypeptide: Acireductone dioxygenase 2 (198 aa).

Positions 99, 101, 105, and 144 each coordinate Fe(2+). Ni(2+) is bound by residues His99, His101, Glu105, and His144.

This sequence belongs to the acireductone dioxygenase (ARD) family. Fe(2+) serves as cofactor. It depends on Ni(2+) as a cofactor. In terms of tissue distribution, ubiquitous.

Its subcellular location is the cytoplasm. The protein resides in the nucleus. It catalyses the reaction 1,2-dihydroxy-5-(methylsulfanyl)pent-1-en-3-one + O2 = 4-methylsulfanyl-2-oxobutanoate + formate + 2 H(+). The enzyme catalyses 1,2-dihydroxy-5-(methylsulfanyl)pent-1-en-3-one + O2 = 3-(methylsulfanyl)propanoate + CO + formate + 2 H(+). Its pathway is amino-acid biosynthesis; L-methionine biosynthesis via salvage pathway; L-methionine from S-methyl-5-thio-alpha-D-ribose 1-phosphate: step 5/6. Its function is as follows. Catalyzes 2 different reactions between oxygen and the acireductone 1,2-dihydroxy-3-keto-5-methylthiopentene (DHK-MTPene) depending upon the metal bound in the active site. Fe-containing acireductone dioxygenase (Fe-ARD) produces formate and 2-keto-4-methylthiobutyrate (KMTB), the alpha-ketoacid precursor of methionine in the methionine recycle pathway. Ni-containing acireductone dioxygenase (Ni-ARD) produces methylthiopropionate, carbon monoxide and formate, and does not lie on the methionine recycle pathway. The protein is Acireductone dioxygenase 2 (ARD2) of Oryza sativa subsp. indica (Rice).